The chain runs to 148 residues: Deoxyuridine 5'-triphosphate nucleotidohydrolase (148 aa).

Residues 67-69 (RSG), Asn-80, 84-86 (LID), and Met-94 contribute to the substrate site.

The protein belongs to the dUTPase family. It depends on Mg(2+) as a cofactor.

The catalysed reaction is dUTP + H2O = dUMP + diphosphate + H(+). Its pathway is pyrimidine metabolism; dUMP biosynthesis; dUMP from dCTP (dUTP route): step 2/2. Functionally, this enzyme is involved in nucleotide metabolism: it produces dUMP, the immediate precursor of thymidine nucleotides and it decreases the intracellular concentration of dUTP so that uracil cannot be incorporated into DNA. In Burkholderia ambifaria (strain MC40-6), this protein is Deoxyuridine 5'-triphosphate nucleotidohydrolase.